The following is a 312-amino-acid chain: Large ribosomal subunit protein uL15m (312 aa).

The disordered stretch occupies residues 63-89 (RIRKGRGPSSGYGKTAGRGTKGQKAHG). Residues 70–82 (PSSGYGKTAGRGT) are compositionally biased toward gly residues.

Belongs to the universal ribosomal protein uL15 family. As to quaternary structure, component of the mitochondrial large ribosomal subunit (mt-LSU). Mature N.crassa 74S mitochondrial ribosomes consist of a small (37S) and a large (54S) subunit. The 37S small subunit contains a 16S ribosomal RNA (16S mt-rRNA) and 32 different proteins. The 54S large subunit contains a 23S rRNA (23S mt-rRNA) and 42 different proteins.

It is found in the mitochondrion. Functionally, component of the mitochondrial ribosome (mitoribosome), a dedicated translation machinery responsible for the synthesis of mitochondrial genome-encoded proteins, including at least some of the essential transmembrane subunits of the mitochondrial respiratory chain. The mitoribosomes are attached to the mitochondrial inner membrane and translation products are cotranslationally integrated into the membrane. This is Large ribosomal subunit protein uL15m (mrpl10) from Neurospora crassa (strain ATCC 24698 / 74-OR23-1A / CBS 708.71 / DSM 1257 / FGSC 987).